The following is a 149-amino-acid chain: Transcriptional repressor NrdR (149 aa).

The segment at 3-34 (CPFCGANDTKVIDSRLVADGHQVRRRRQCLAC) is a zinc-finger region. An ATP-cone domain is found at 49–139 (PRVIKTDGNR…VYRSFEDIRE (91 aa)).

Belongs to the NrdR family. Zn(2+) is required as a cofactor.

Negatively regulates transcription of bacterial ribonucleotide reductase nrd genes and operons by binding to NrdR-boxes. This chain is Transcriptional repressor NrdR, found in Photobacterium profundum (strain SS9).